Here is a 269-residue protein sequence, read N- to C-terminus: 1-(5-phosphoribosyl)-5-[(5-phosphoribosylamino)methylideneamino] imidazole-4-carboxamide isomerase (269 aa).

The active-site Proton acceptor is Asp10. Catalysis depends on Asp132, which acts as the Proton donor.

This sequence belongs to the HisA/HisF family.

The protein resides in the cytoplasm. The enzyme catalyses 1-(5-phospho-beta-D-ribosyl)-5-[(5-phospho-beta-D-ribosylamino)methylideneamino]imidazole-4-carboxamide = 5-[(5-phospho-1-deoxy-D-ribulos-1-ylimino)methylamino]-1-(5-phospho-beta-D-ribosyl)imidazole-4-carboxamide. Its pathway is amino-acid biosynthesis; L-histidine biosynthesis; L-histidine from 5-phospho-alpha-D-ribose 1-diphosphate: step 4/9. The polypeptide is 1-(5-phosphoribosyl)-5-[(5-phosphoribosylamino)methylideneamino] imidazole-4-carboxamide isomerase (Xylella fastidiosa (strain Temecula1 / ATCC 700964)).